The primary structure comprises 150 residues: Ribosome-binding factor A (150 aa).

Positions 126-150 are disordered; it reads EVARDLSHDDDEDGGADEAPRNGDE.

This sequence belongs to the RbfA family. Monomer. Binds 30S ribosomal subunits, but not 50S ribosomal subunits or 70S ribosomes.

The protein localises to the cytoplasm. One of several proteins that assist in the late maturation steps of the functional core of the 30S ribosomal subunit. Associates with free 30S ribosomal subunits (but not with 30S subunits that are part of 70S ribosomes or polysomes). Required for efficient processing of 16S rRNA. May interact with the 5'-terminal helix region of 16S rRNA. The chain is Ribosome-binding factor A from Brucella abortus (strain S19).